An 804-amino-acid chain; its full sequence is Ion-translocating oxidoreductase complex subunit C (804 aa).

2 4Fe-4S ferredoxin-type domains span residues 366-397 (SEMGQNEAEQGCIRCSACADACPAALLPQQLY) and 407-436 (KARAHNIADCIECGACAYVCPSNIPLVQYY). [4Fe-4S] cluster contacts are provided by Cys-377, Cys-380, Cys-383, Cys-387, Cys-416, Cys-419, Cys-422, and Cys-426. Disordered stretches follow at residues 466–532 (RLER…EVRV) and 567–804 (KAAQ…MQED). 7 stretches are compositionally biased toward low complexity: residues 484–495 (SVASSDAGAIAA), 567–582 (KAAQAAEASPTEAPQQ), 592–619 (AAVAAAVARTKAKKAAQAAEASPTEAPQ), 629–660 (KAAVAAAVARAKAKKAAQAAEASATEAPQQSA), 668–693 (AAVAAAVARAKAKKAAQAAEASATEA), 706–731 (AAVAAAVARAKAKKAAQAAEASATEA), and 744–769 (AAVAAAVARAKAKKAAQAAEASATEA).

This sequence belongs to the 4Fe4S bacterial-type ferredoxin family. RnfC subfamily. The complex is composed of six subunits: RnfA, RnfB, RnfC, RnfD, RnfE and RnfG. Requires [4Fe-4S] cluster as cofactor.

It localises to the cell inner membrane. Part of a membrane-bound complex that couples electron transfer with translocation of ions across the membrane. The polypeptide is Ion-translocating oxidoreductase complex subunit C (Erwinia tasmaniensis (strain DSM 17950 / CFBP 7177 / CIP 109463 / NCPPB 4357 / Et1/99)).